Here is a 245-residue protein sequence, read N- to C-terminus: DNA polymerase sliding clamp 1 (245 aa).

Belongs to the PCNA family. In terms of assembly, homotrimer. The subunits circularize to form a toroid; DNA passes through its center. Replication factor C (RFC) is required to load the toroid on the DNA.

Sliding clamp subunit that acts as a moving platform for DNA processing. Responsible for tethering the catalytic subunit of DNA polymerase and other proteins to DNA during high-speed replication. In Sulfurisphaera ohwakuensis, this protein is DNA polymerase sliding clamp 1.